Here is a 249-residue protein sequence, read N- to C-terminus: Sugar fermentation stimulation protein homolog (249 aa).

Belongs to the SfsA family.

In Prochlorococcus marinus (strain MIT 9515), this protein is Sugar fermentation stimulation protein homolog.